Here is a 130-residue protein sequence, read N- to C-terminus: UPF0713 protein YngL (130 aa).

The next 3 membrane-spanning stretches (helical) occupy residues 4-25, 62-84, and 89-111; these read LSFL…LIVF, MLNC…YLFL, and IPLI…VGVG.

It belongs to the UPF0713 family.

It localises to the cell membrane. In Bacillus subtilis (strain 168), this protein is UPF0713 protein YngL (yngL).